A 204-amino-acid chain; its full sequence is Large ribosomal subunit protein eL15 (204 aa).

It belongs to the eukaryotic ribosomal protein eL15 family. As to quaternary structure, component of the large ribosomal subunit.

Its subcellular location is the cytoplasm. Its function is as follows. Component of the large ribosomal subunit. The ribosome is a large ribonucleoprotein complex responsible for the synthesis of proteins in the cell. The sequence is that of Large ribosomal subunit protein eL15 (rpl15) from Carassius auratus (Goldfish).